We begin with the raw amino-acid sequence, 96 residues long: MDSKSFLLLLLLFCFLFLHDASDLTQAHAHVQGLSNRKMMMMKMESEWVGANGEAEKAKTKGLGLHEELRTVPSGPDPLHHHVNPPRQPRNNFQLP.

An N-terminal signal peptide occupies residues 1-21 (MDSKSFLLLLLLFCFLFLHDA). The interval 68 to 96 (ELRTVPSGPDPLHHHVNPPRQPRNNFQLP) is disordered. Hydroxyproline occurs at positions 73 and 76. Proline 76 is a glycosylation site (O-linked (Ara...) hydroxyproline).

This sequence belongs to the CLV3/ESR signal peptide family. As to quaternary structure, interacts with the extracellular leucine-rich repeat region of CLV1. Interacts with CLV2. CLV3-derived CLE peptides interacts with a tetrameric complex made of two CLV2/CRN heterodimers. The MCLV3 peptide contains two hydroxyprolines, but hydroxylation had no direct effect on MCLV3 activity. Post-translationally, the O-glycosylation (arabinosylation) of the hydroxyproline P-76 enhances binding affinity of the MCLV3 peptide for its receptor. In terms of tissue distribution, first detected in heart stage embryos in a patch of cells between the developing cotyledons. In vegetative and inflorescence meristems, expressed in a small cone of cells at the meristem apex.

It is found in the secreted. The protein localises to the extracellular space. Extracellular signal that regulates meristem maintenance. Acts with CLV1 as a ligand-receptor pair in a signal transduction pathway coordinating growth between adjacent meristematic regions and controlling the balance between meristem cell proliferation and differentiation. Its function is as follows. The secreted peptide MCLV3 activates a signal transduction cascade to restrict WUSCHEL (WUS) expression, inducing shoot and root meristem consumption as cells differentiated into other organs. In Arabidopsis thaliana (Mouse-ear cress), this protein is Protein CLAVATA 3.